Consider the following 150-residue polypeptide: 6,7-dimethyl-8-ribityllumazine synthase (150 aa).

Residues phenylalanine 11, 43-45 (TYE), and 67-69 (AVI) each bind 5-amino-6-(D-ribitylamino)uracil. Residue 72–73 (AT) coordinates (2S)-2-hydroxy-3-oxobutyl phosphate. Histidine 75 functions as the Proton donor in the catalytic mechanism. Residue leucine 100 coordinates 5-amino-6-(D-ribitylamino)uracil. A (2S)-2-hydroxy-3-oxobutyl phosphate-binding site is contributed by arginine 115.

Belongs to the DMRL synthase family.

It catalyses the reaction (2S)-2-hydroxy-3-oxobutyl phosphate + 5-amino-6-(D-ribitylamino)uracil = 6,7-dimethyl-8-(1-D-ribityl)lumazine + phosphate + 2 H2O + H(+). Its pathway is cofactor biosynthesis; riboflavin biosynthesis; riboflavin from 2-hydroxy-3-oxobutyl phosphate and 5-amino-6-(D-ribitylamino)uracil: step 1/2. Its function is as follows. Catalyzes the formation of 6,7-dimethyl-8-ribityllumazine by condensation of 5-amino-6-(D-ribitylamino)uracil with 3,4-dihydroxy-2-butanone 4-phosphate. This is the penultimate step in the biosynthesis of riboflavin. The polypeptide is 6,7-dimethyl-8-ribityllumazine synthase (Staphylothermus marinus (strain ATCC 43588 / DSM 3639 / JCM 9404 / F1)).